We begin with the raw amino-acid sequence, 176 residues long: NAD(P)H-quinone oxidoreductase subunit I, chloroplastic (176 aa).

4Fe-4S ferredoxin-type domains are found at residues G55 to E84 and L95 to E124. Positions 64, 67, 70, 74, 104, 107, 110, and 114 each coordinate [4Fe-4S] cluster.

The protein belongs to the complex I 23 kDa subunit family. In terms of assembly, NDH is composed of at least 16 different subunits, 5 of which are encoded in the nucleus. Requires [4Fe-4S] cluster as cofactor.

The protein localises to the plastid. It is found in the chloroplast thylakoid membrane. The enzyme catalyses a plastoquinone + NADH + (n+1) H(+)(in) = a plastoquinol + NAD(+) + n H(+)(out). It carries out the reaction a plastoquinone + NADPH + (n+1) H(+)(in) = a plastoquinol + NADP(+) + n H(+)(out). Its function is as follows. NDH shuttles electrons from NAD(P)H:plastoquinone, via FMN and iron-sulfur (Fe-S) centers, to quinones in the photosynthetic chain and possibly in a chloroplast respiratory chain. The immediate electron acceptor for the enzyme in this species is believed to be plastoquinone. Couples the redox reaction to proton translocation, and thus conserves the redox energy in a proton gradient. The polypeptide is NAD(P)H-quinone oxidoreductase subunit I, chloroplastic (Populus trichocarpa (Western balsam poplar)).